The primary structure comprises 200 residues: Large ribosomal subunit protein uL4 (200 aa).

The interval 42 to 65 is disordered; sequence TRAQKTRSEVSGGGAKPWRQKGTG.

The protein belongs to the universal ribosomal protein uL4 family. Part of the 50S ribosomal subunit.

Functionally, one of the primary rRNA binding proteins, this protein initially binds near the 5'-end of the 23S rRNA. It is important during the early stages of 50S assembly. It makes multiple contacts with different domains of the 23S rRNA in the assembled 50S subunit and ribosome. In terms of biological role, forms part of the polypeptide exit tunnel. The sequence is that of Large ribosomal subunit protein uL4 from Vibrio atlanticus (strain LGP32) (Vibrio splendidus (strain Mel32)).